We begin with the raw amino-acid sequence, 130 residues long: MSAEEISNPLAESGVTISSDSEQYSAPESASPQSPSSSSPAVVLYQPPTVWSLFRSAVINLFLPFVNGMMLGFGELFAHEAAFRLGWSNTKVFPVSRRDARPIGPGVEVVERPRRRVDLDDHLDELTSLE.

The interval 1–41 is disordered; that stretch reads MSAEEISNPLAESGVTISSDSEQYSAPESASPQSPSSSSPA. A compositionally biased stretch (polar residues) spans 15 to 24; sequence VTISSDSEQY. Residues 25 to 41 show a composition bias toward low complexity; it reads SAPESASPQSPSSSSPA.

Belongs to the MIM1 family.

Its subcellular location is the mitochondrion outer membrane. Its function is as follows. Required for the assembly of the TOM (translocase of outer membrane) receptor complex, which is responsible for the recognition and translocation of cytosolically synthesized mitochondrial preproteins. The sequence is that of Mitochondrial import protein 1 from Neurospora crassa (strain ATCC 24698 / 74-OR23-1A / CBS 708.71 / DSM 1257 / FGSC 987).